The following is a 426-amino-acid chain: Selenate reductase subunit C (426 aa).

A run of 10 helical transmembrane segments spans residues 5 to 25 (LYFT…YIRL), 40 to 60 (WGLW…SFLL), 78 to 98 (LALF…LIDL), 119 to 139 (WEIQ…WFLM), 187 to 207 (ILGI…GSLF), 223 to 243 (IIFL…LYSF), 261 to 281 (LLTL…LIGL), 302 to 322 (FIFW…LITI), 330 to 350 (MGLA…ILVI), and 385 to 405 (VGLI…VPVF).

Belongs to the NrfD family. The complex is composed of three subunits: SrdA, SrdB and SrdC.

The protein localises to the cell membrane. It catalyses the reaction selenite + a quinone + H2O = selenate + a quinol. In terms of biological role, component of the respiratory selenate reductase complex, which catalyzes the reduction of selenate to selenite. This subunit probably receives electrons directly from the membrane quinone pool and transfers the electrons to the iron-sulfur clusters of SrdB. May be the membrane anchor protein subunit of the complex. The sequence is that of Selenate reductase subunit C from Mesobacillus selenatarsenatis (strain DSM 18680 / JCM 14380 / FERM P-15431 / SF-1).